The chain runs to 579 residues: MKLNYFQGALYPWRFCVIVGLLLAMVGAIVWRIVDLHVIDHDFLKGQGDARSVRHIAIPAHRGLITDRNGEPLAVSTPVTTLWANPKELMTAKERWPQLAAALGQDTKLFADRIEQNAEREFIYLVRGLTPEQGEGVIALKVPGVYSIEEFRRFYPAGEVVAHAVGFTDVDDRGREGIELAFDEWLAGVPGKRQVLKDRRGRVIKDVQVTKNAKPGKTLALSIDLRLQYLAHRELRNALLENGAKAGSLVIMDVKTGEILAMTNQPTYNPNNRRNLQPAAMRNRAMIDVFEPGSTVKPFSMSAALASGRWKPSDIVDVYPGTLQIGRYTIRDVSRNSRQLDLTGILIKSSNVGISKIAFDIGAESIYSVMQQVGLGQDTGLGFPGERVGNLPNHRKWPKAETATLAYGYGLSVTAIQLAHAYAALANDGKSVPLSMTRVDRVPDGVQVISPEVASTVQGMLQQVVEAQGGVFRAQVPGYHAAGKSGTARKVSVGTKGYRENAYRSLFAGFAPATDPRIAMVVVIDEPSKAGYFGGLVSAPVFSKVMAGALRLMNVPPDNLPTATEQQQVNAAPAKGGRG.

Residues 15–35 form a helical membrane-spanning segment; it reads FCVIVGLLLAMVGAIVWRIVD. S294 acts as the Acyl-ester intermediate in catalysis. The interval 558–579 is disordered; the sequence is DNLPTATEQQQVNAAPAKGGRG. The span at 561-570 shows a compositional bias: polar residues; the sequence is PTATEQQQVN.

Belongs to the transpeptidase family. FtsI subfamily.

Its subcellular location is the cell inner membrane. It catalyses the reaction Preferential cleavage: (Ac)2-L-Lys-D-Ala-|-D-Ala. Also transpeptidation of peptidyl-alanyl moieties that are N-acyl substituents of D-alanine.. It participates in cell wall biogenesis; peptidoglycan biosynthesis. Functionally, catalyzes cross-linking of the peptidoglycan cell wall at the division septum. Binds penicillin. This is Peptidoglycan D,D-transpeptidase FtsI from Pseudomonas aeruginosa (strain ATCC 15692 / DSM 22644 / CIP 104116 / JCM 14847 / LMG 12228 / 1C / PRS 101 / PAO1).